The following is a 211-amino-acid chain: Superoxide dismutase [Fe] (211 aa).

4 residues coordinate Fe cation: H31, H79, D165, and H169.

It belongs to the iron/manganese superoxide dismutase family. In terms of assembly, homotetramer. It depends on Fe cation as a cofactor.

It catalyses the reaction 2 superoxide + 2 H(+) = H2O2 + O2. Its function is as follows. Destroys superoxide anion radicals which are normally produced within the cells and which are toxic to biological systems. In Pyrobaculum aerophilum (strain ATCC 51768 / DSM 7523 / JCM 9630 / CIP 104966 / NBRC 100827 / IM2), this protein is Superoxide dismutase [Fe] (sod).